The following is a 437-amino-acid chain: Trigger factor (437 aa).

The 86-residue stretch at D163 to P248 folds into the PPIase FKBP-type domain.

Belongs to the FKBP-type PPIase family. Tig subfamily.

It localises to the cytoplasm. The catalysed reaction is [protein]-peptidylproline (omega=180) = [protein]-peptidylproline (omega=0). Functionally, involved in protein export. Acts as a chaperone by maintaining the newly synthesized protein in an open conformation. Functions as a peptidyl-prolyl cis-trans isomerase. The polypeptide is Trigger factor (Variovorax paradoxus (strain S110)).